The sequence spans 616 residues: Membrane protein insertase YidC (616 aa).

Residues 9-29 form a helical membrane-spanning segment; it reads ILAVILSGLVLIAWQYFYNVP. The interval 37 to 80 is disordered; the sequence is QQQAQAELQKTTPQPTASATPGATPQSGGAAQPSTPAAGQQAQP. Residues 44 to 71 are compositionally biased toward polar residues; sequence LQKTTPQPTASATPGATPQSGGAAQPST. Helical transmembrane passes span 388–408, 462–482, 520–540, and 559–579; these read FFGN…LLFF, LPVV…FVTI, VFGH…TMWF, and WMPL…VIYW.

Belongs to the OXA1/ALB3/YidC family. Type 1 subfamily. Interacts with the Sec translocase complex via SecD. Specifically interacts with transmembrane segments of nascent integral membrane proteins during membrane integration.

It localises to the cell inner membrane. Functionally, required for the insertion and/or proper folding and/or complex formation of integral membrane proteins into the membrane. Involved in integration of membrane proteins that insert both dependently and independently of the Sec translocase complex, as well as at least some lipoproteins. Aids folding of multispanning membrane proteins. This Bradyrhizobium diazoefficiens (strain JCM 10833 / BCRC 13528 / IAM 13628 / NBRC 14792 / USDA 110) protein is Membrane protein insertase YidC.